Consider the following 410-residue polypeptide: 26S proteasome non-ATPase regulatory subunit 6 (410 aa).

Positions 207-382 (DFAGAADLFL…GVIEVNHRDS (176 aa)) constitute a PCI domain.

This sequence belongs to the proteasome subunit S10 family. In terms of tissue distribution, expressed in multiple tissues including the intestine, pharynx and hypodermis.

Acts as a regulatory subunit of the 26S proteasome which is involved in the ATP-dependent degradation of ubiquitinated proteins. This Caenorhabditis elegans protein is 26S proteasome non-ATPase regulatory subunit 6 (rpn-7).